The following is a 601-amino-acid chain: Glutathione-regulated potassium-efflux system protein KefB (601 aa).

Transmembrane regions (helical) follow at residues 4 to 24 (ADLLTAGVLFLFAAVAAVPLA), 29 to 49 (IGAVLGYLLAGIAIGPWGLGF), 55 to 75 (EILHFSELGVVFLMFIIGLEL), 87 to 107 (IFGVGAAQVLLSAAVLAGLLM), 111 to 131 (FLWQAAVVGGIGLAMSSTAMA), 152 to 172 (VLLFQDLAVIPALALVPLLAG), 177 to 197 (HFDWFKVAMKVLAFAVMLIGG), 207 to 227 (FIAASGVREVFTAATLLLVLS), 230 to 250 (LFMDALGLSMALGTFIAGVLL), 262 to 282 (AIDPFKGLLLGLFFISVGMSL), 284 to 304 (LGVLYTHLLWVAASVVILVAI), 324 to 344 (MQFASVLSQGGEFAFVLFSTA), and 356 to 376 (ALLLVTVTLSMMTTPLLMKGI). An RCK N-terminal domain is found at 400 to 519 (KPQVIVVGFG…AGVTQFSRET (120 aa)).

This sequence belongs to the monovalent cation:proton antiporter 2 (CPA2) transporter (TC 2.A.37) family. KefB subfamily. Interacts with the regulatory subunit KefG.

It localises to the cell inner membrane. Its function is as follows. Pore-forming subunit of a potassium efflux system that confers protection against electrophiles. Catalyzes K(+)/H(+) antiport. This Salmonella schwarzengrund (strain CVM19633) protein is Glutathione-regulated potassium-efflux system protein KefB.